The following is a 417-amino-acid chain: Phosphoglycerate kinase 1 (417 aa).

The residue at position 2 (Ser2) is an N-acetylserine. Phosphoserine is present on residues Ser2 and Ser4. N6-succinyllysine is present on Lys6. Position 11 is an N6-acetyllysine (Lys11). Residues Val23, Asp24, Phe25, Asn26, Gln38, and Arg39 each contribute to the (2R)-3-phosphoglycerate site. Positions 38–43 (QRIKAA) are mitochondrial targeting region exposed following cis-trans isomerization by PIN1 and recognized by the TOM complex for mitochondrial translocation of the protein. Lys48 bears the N6-acetyllysine; alternate mark. N6-succinyllysine; alternate is present on Lys48. (2R)-3-phosphoglycerate-binding residues include Ser62, His63, Gly65, and Arg66. Lys75 is modified (N6-acetyllysine). Residue Tyr76 is modified to Phosphotyrosine. Residues Lys86 and Lys91 each carry the N6-acetyllysine modification. At Lys97 the chain carries N6-acetyllysine; alternate. At Lys97 the chain carries N6-(2-hydroxyisobutyryl)lysine; alternate. 2 residues coordinate (2R)-3-phosphoglycerate: Leu122 and Arg123. Lys131 is subject to N6-acetyllysine; alternate. Lys131 carries the N6-malonyllysine; alternate modification. Lys146 is modified (N6-acetyllysine). Positions 170 and 171 each coordinate (2R)-3-phosphoglycerate. Lys191 is subject to N6-succinyllysine. Residue Tyr196 is modified to Phosphotyrosine. The residue at position 199 (Lys199) is an N6-acetyllysine. At Ser203 the chain carries Phosphoserine. Gly214 contacts ADP. CDP is bound at residue Gly214. AMP is bound by residues Ala215 and Lys216. ATP is bound at residue Ala215. Residue Ala215 coordinates Mg(2+). At Lys216 the chain carries N6-(2-hydroxyisobutyryl)lysine. Mg(2+)-binding residues include Ala218 and Asp219. Asp219 serves as a coordination point for CDP. An AMP-binding site is contributed by Lys220. Lys220 is a binding site for ATP. Residue Lys220 is modified to N6-(2-hydroxyisobutyryl)lysine. Gly238 provides a ligand contact to ADP. Gly238 lines the CDP pocket. Gly239 is an AMP binding site. Gly239 serves as a coordination point for ATP. Lys267 and Lys291 each carry N6-acetyllysine. Gly313 serves as a coordination point for AMP. Gly313 is a binding site for ATP. At Lys323 the chain carries N6-(2-hydroxyisobutyryl)lysine. CDP is bound by residues Gly338, Val340, and Phe343. Phe343 is a binding site for ADP. Glu344 serves as a coordination point for AMP. An ATP-binding site is contributed by Glu344. A Phosphoserine modification is found at Ser354. Lys361 is modified (N6-acetyllysine). ATP is bound by residues Asp375 and Thr376. Asp375 provides a ligand contact to Mg(2+).

Belongs to the phosphoglycerate kinase family. Monomer. Interacts with kinase MAPK1/ERK2; the interaction is direct, occurs under hypoxic conditions, and promotes its interaction with PIN1. Interacts with peptidyl-prolyl cis-trans isomerase PIN1; the interaction is direct, occurs under hypoxic conditions, and targets the protein to the mitochondrion by promoting interactions with the TOM complex. Interacts with mitochondrial circRNA mcPGK1 (via its 2nd stem-loop); the interaction is direct and targets the protein to the mitochondrion by promoting interactions with the TOM complex. Interacts with pyruvate dehydrogenase kinase PDK1; the interaction is direct, occurs under hypoxic conditions and leads to PDK1-mediated inhibition of pyruvate dehydrogenase complex activity. Requires Mg(2+) as cofactor. Post-translationally, phosphorylated at Ser-203 by MAPK1/ERK2 under hypoxic conditions, which promotes its mitochondrial targeting.

It localises to the cytoplasm. The protein resides in the cytosol. Its subcellular location is the mitochondrion matrix. The enzyme catalyses (2R)-3-phosphoglycerate + ATP = (2R)-3-phospho-glyceroyl phosphate + ADP. It carries out the reaction L-seryl-[protein] + ATP = O-phospho-L-seryl-[protein] + ADP + H(+). The protein operates within carbohydrate degradation; glycolysis; pyruvate from D-glyceraldehyde 3-phosphate: step 2/5. In terms of biological role, catalyzes one of the two ATP producing reactions in the glycolytic pathway via the reversible conversion of 1,3-diphosphoglycerate to 3-phosphoglycerate. Both L- and D- forms of purine and pyrimidine nucleotides can be used as substrates, but the activity is much lower on pyrimidines. In addition to its role as a glycolytic enzyme, it seems that PGK-1 acts as a polymerase alpha cofactor protein (primer recognition protein). Acts as a protein kinase when localized to the mitochondrion where it phosphorylates pyruvate dehydrogenase kinase PDK1 to inhibit pyruvate dehydrogenase complex activity and suppress the formation of acetyl-coenzyme A from pyruvate, and consequently inhibit oxidative phosphorylation and promote glycolysis. May play a role in sperm motility. This chain is Phosphoglycerate kinase 1 (Pgk1), found in Rattus norvegicus (Rat).